The primary structure comprises 330 residues: Succinylglutamate desuccinylase (330 aa).

Residues H53, E56, and H147 each contribute to the Zn(2+) site. The active site involves E210.

This sequence belongs to the AspA/AstE family. Succinylglutamate desuccinylase subfamily. It depends on Zn(2+) as a cofactor.

It carries out the reaction N-succinyl-L-glutamate + H2O = L-glutamate + succinate. The protein operates within amino-acid degradation; L-arginine degradation via AST pathway; L-glutamate and succinate from L-arginine: step 5/5. Its function is as follows. Transforms N(2)-succinylglutamate into succinate and glutamate. The polypeptide is Succinylglutamate desuccinylase (Yersinia pseudotuberculosis serotype O:3 (strain YPIII)).